Here is a 312-residue protein sequence, read N- to C-terminus: Probable phytanoyl-CoA dioxygenase (312 aa).

2-oxoglutarate is bound by residues lysine 84, methionine 124, 142–144 (HQD), and tryptophan 160. Fe cation is bound by residues histidine 142 and aspartate 144. Histidine 231 is a binding site for Fe cation. 2 residues coordinate 2-oxoglutarate: serine 233 and arginine 242.

Belongs to the PhyH family. It depends on Fe cation as a cofactor. Requires L-ascorbate as cofactor.

It catalyses the reaction phytanoyl-CoA + 2-oxoglutarate + O2 = 2-hydroxyphytanoyl-CoA + succinate + CO2. Its pathway is lipid metabolism; fatty acid metabolism. Its function is as follows. Converts phytanoyl-CoA to 2-hydroxyphytanoyl-CoA. The polypeptide is Probable phytanoyl-CoA dioxygenase (Caenorhabditis elegans).